Here is a 310-residue protein sequence, read N- to C-terminus: tRNA dimethylallyltransferase (310 aa).

13–20 (GPTASGKT) is an ATP binding site. 15–20 (TASGKT) provides a ligand contact to substrate. Interaction with substrate tRNA regions lie at residues 38–41 (DSAL), 162–166 (QRLSR), 243–248 (RCVGYR), and 276–283 (KRQITWLR).

It belongs to the IPP transferase family. As to quaternary structure, monomer. It depends on Mg(2+) as a cofactor.

The enzyme catalyses adenosine(37) in tRNA + dimethylallyl diphosphate = N(6)-dimethylallyladenosine(37) in tRNA + diphosphate. Its function is as follows. Catalyzes the transfer of a dimethylallyl group onto the adenine at position 37 in tRNAs that read codons beginning with uridine, leading to the formation of N6-(dimethylallyl)adenosine (i(6)A). The polypeptide is tRNA dimethylallyltransferase (Vibrio parahaemolyticus serotype O3:K6 (strain RIMD 2210633)).